Reading from the N-terminus, the 295-residue chain is N-acetylmuramic acid 6-phosphate etherase (295 aa).

Residues 54 to 217 (VIASFRQGGR…STASMIGIGK (164 aa)) enclose the SIS domain. E82 functions as the Proton donor in the catalytic mechanism. E113 is a catalytic residue.

The protein belongs to the GCKR-like family. MurNAc-6-P etherase subfamily. Homodimer.

The enzyme catalyses N-acetyl-D-muramate 6-phosphate + H2O = N-acetyl-D-glucosamine 6-phosphate + (R)-lactate. The protein operates within amino-sugar metabolism; N-acetylmuramate degradation. Functionally, specifically catalyzes the cleavage of the D-lactyl ether substituent of MurNAc 6-phosphate, producing GlcNAc 6-phosphate and D-lactate. This is N-acetylmuramic acid 6-phosphate etherase from Geobacillus sp. (strain WCH70).